Reading from the N-terminus, the 504-residue chain is Cystathionine beta-synthase (504 aa).

Heme is bound by residues cysteine 12 and histidine 23. Lysine 78 bears the N6-(pyridoxal phosphate)lysine mark. Residues asparagine 108, 215 to 219 (GTGGT), and serine 307 contribute to the pyridoxal 5'-phosphate site. CBS domains are found at residues 375–434 (LSFD…IVKC) and 442–498 (MVKQ…NGTS).

This sequence belongs to the cysteine synthase/cystathionine beta-synthase family. Homodimer. Pyridoxal 5'-phosphate serves as cofactor.

It catalyses the reaction L-homocysteine + L-serine = L,L-cystathionine + H2O. It functions in the pathway amino-acid biosynthesis; L-cysteine biosynthesis; L-cysteine from L-homocysteine and L-serine: step 1/2. Its activity is regulated as follows. Has no response to S-adenosyl-methionine/AdoMet, unlike mammalian orthologs. Binds non-covalently to a heme group that may control the redox sensitivity of the enzyme. In terms of biological role, hydro-lyase catalyzing the first step of the transsulfuration pathway, where the hydroxyl group of L-serine is displaced by L-homocysteine in a beta-replacement reaction to form L-cystathionine, the precursor of L-cysteine. The sequence is that of Cystathionine beta-synthase from Apis mellifera (Honeybee).